A 1518-amino-acid chain; its full sequence is Putative cellulose synthase 3 (1518 aa).

Residues 1–731 are catalytic; it reads MYGTWFTTGK…EEKLEKQSFV (731 aa). Transmembrane regions (helical) follow at residues 24 to 44, 71 to 91, and 105 to 125; these read PVWV…SVRI, ITVF…VWRL, and LAVL…LSYF. A catalytic subdomain A region spans residues 144-237; the sequence is QWPSVDVFVP…FAVIFDCDHV (94 aa). Catalysis depends on residues Asp-186 and Asp-330. Positions 314 to 374 are catalytic subdomain B; it reads EAVMGIGGFA…GQRVRWARGM (61 aa). 5 helical membrane-spanning segments follow: residues 404–424, 428–448, 465–485, 514–534, and 543–563; these read FLFA…LFLG, IAAS…HSVI, IYET…LLQP, ILAG…VWQF, and FILN…SIAV. The 100-residue stretch at 569–668 folds into the PilZ domain; sequence QTRNAPRVSV…ERQVVSMVFG (100 aa). The interval 732–1518 is cyclic di-GMP binding domain; sequence LKPVPRSARH…IARDDLTGEL (787 aa). The tract at residues 765 to 785 is disordered; that stretch reads APSPDQSGVTAETPFGDSNTG. Over residues 768–785 the composition is skewed to polar residues; it reads PDQSGVTAETPFGDSNTG. The helical transmembrane segment at 1481–1501 threads the bilayer; that stretch reads ALYLAGLAGAGLAALGVWAWL.

This sequence in the N-terminal section; belongs to the glycosyltransferase 2 family. The protein in the C-terminal section; belongs to the AcsB/BcsB family.

The protein localises to the cell inner membrane. The catalysed reaction is [(1-&gt;4)-beta-D-glucosyl](n) + UDP-alpha-D-glucose = [(1-&gt;4)-beta-D-glucosyl](n+1) + UDP + H(+). It participates in glycan metabolism; bacterial cellulose biosynthesis. The protein is Putative cellulose synthase 3 (bcsABII-B) of Komagataeibacter xylinus (Gluconacetobacter xylinus).